A 574-amino-acid chain; its full sequence is Phosphoenolpyruvate-protein phosphotransferase (574 aa).

The active-site Tele-phosphohistidine intermediate is His190. Phosphoenolpyruvate contacts are provided by Arg297 and Arg333. Mg(2+) contacts are provided by Glu432 and Asp456. Phosphoenolpyruvate is bound by residues 455 to 456 (ND) and Arg466. The active-site Proton donor is the Cys503.

The protein belongs to the PEP-utilizing enzyme family. In terms of assembly, homodimer. The cofactor is Mg(2+).

The protein localises to the cytoplasm. It catalyses the reaction L-histidyl-[protein] + phosphoenolpyruvate = N(pros)-phospho-L-histidyl-[protein] + pyruvate. Its function is as follows. General (non sugar-specific) component of the phosphoenolpyruvate-dependent sugar phosphotransferase system (sugar PTS). This major carbohydrate active-transport system catalyzes the phosphorylation of incoming sugar substrates concomitantly with their translocation across the cell membrane. Enzyme I transfers the phosphoryl group from phosphoenolpyruvate (PEP) to the phosphoryl carrier protein (HPr). The polypeptide is Phosphoenolpyruvate-protein phosphotransferase (ptsI) (Latilactobacillus sakei (Lactobacillus sakei)).